The chain runs to 365 residues: 2-aminoethylphosphonate--pyruvate transaminase (365 aa).

An N6-(pyridoxal phosphate)lysine modification is found at Lys194.

This sequence belongs to the class-V pyridoxal-phosphate-dependent aminotransferase family. PhnW subfamily. In terms of assembly, homodimer. The cofactor is pyridoxal 5'-phosphate.

The enzyme catalyses (2-aminoethyl)phosphonate + pyruvate = phosphonoacetaldehyde + L-alanine. Involved in phosphonate degradation. The protein is 2-aminoethylphosphonate--pyruvate transaminase of Bacillus thuringiensis subsp. konkukian (strain 97-27).